The following is a 224-amino-acid chain: Virulence transcriptional regulatory protein PhoP (224 aa).

A Response regulatory domain is found at 3–117 (RVLVVEDNAL…EVMARMQALM (115 aa)). 4-aspartylphosphate is present on Asp52. The ompR/PhoB-type DNA-binding region spans 125 to 223 (SQVINISPFQ…VRGQGYLFEL (99 aa)).

In terms of processing, phosphorylated by PhoQ.

Its subcellular location is the cytoplasm. In terms of biological role, member of the two-component regulatory system PhoQ/PhoP which regulates the expression of genes involved in virulence and resistance to host defense antimicrobial peptides. Promotes intramacrophage survival of S.typhi. Is required to enhance bacterial resistance to bile in the human intestinal cells. This Salmonella typhi protein is Virulence transcriptional regulatory protein PhoP (phoP).